A 253-amino-acid polypeptide reads, in one-letter code: Triosephosphate isomerase (253 aa).

9–11 contributes to the substrate binding site; sequence NWK. Residue His95 is the Electrophile of the active site. Glu167 serves as the catalytic Proton acceptor. Substrate is bound by residues Gly173, Ser213, and 234–235; that span reads GG. Residue Ser213 is modified to Phosphoserine.

Belongs to the triosephosphate isomerase family. Homodimer.

The protein localises to the cytoplasm. It catalyses the reaction D-glyceraldehyde 3-phosphate = dihydroxyacetone phosphate. It functions in the pathway carbohydrate biosynthesis; gluconeogenesis. It participates in carbohydrate degradation; glycolysis; D-glyceraldehyde 3-phosphate from glycerone phosphate: step 1/1. Involved in the gluconeogenesis. Catalyzes stereospecifically the conversion of dihydroxyacetone phosphate (DHAP) to D-glyceraldehyde-3-phosphate (G3P). The sequence is that of Triosephosphate isomerase from Geobacillus thermodenitrificans (strain NG80-2).